Reading from the N-terminus, the 150-residue chain is Heat shock protein beta-3 (150 aa).

The 104-residue stretch at 47-150 (KTRAAQSPPV…VEVKDPVGTK (104 aa)) folds into the sHSP domain.

Belongs to the small heat shock protein (HSP20) family.

The protein localises to the cytoplasm. The protein resides in the nucleus. Its function is as follows. Inhibitor of actin polymerization. The chain is Heat shock protein beta-3 (HSPB3) from Homo sapiens (Human).